The chain runs to 249 residues: tRNA pseudouridine synthase A (249 aa).

Residue D53 is the Nucleophile of the active site. Substrate is bound at residue Y111.

Belongs to the tRNA pseudouridine synthase TruA family. As to quaternary structure, homodimer.

The catalysed reaction is uridine(38/39/40) in tRNA = pseudouridine(38/39/40) in tRNA. Functionally, formation of pseudouridine at positions 38, 39 and 40 in the anticodon stem and loop of transfer RNAs. This is tRNA pseudouridine synthase A from Streptococcus pyogenes serotype M1.